We begin with the raw amino-acid sequence, 379 residues long: Cytochrome b (379 aa).

4 consecutive transmembrane segments (helical) span residues 33-53, 77-98, 113-133, and 178-198; these read FGSL…FLAM, WTIR…FIHV, WNIG…GYVL, and FFAL…IHLL. Residues H83 and H97 each coordinate heme b. Residues H182 and H196 each coordinate heme b. H201 is a binding site for a ubiquinone. 4 helical membrane-spanning segments follow: residues 226–246, 288–308, 320–340, and 347–367; these read TKDF…TLFY, LGGV…PFLQ, LSQF…WIGG, and FINI…FIMP.

This sequence belongs to the cytochrome b family. In terms of assembly, the cytochrome bc1 complex contains 11 subunits: 3 respiratory subunits (MT-CYB, CYC1 and UQCRFS1), 2 core proteins (UQCRC1 and UQCRC2) and 6 low-molecular weight proteins (UQCRH/QCR6, UQCRB/QCR7, UQCRQ/QCR8, UQCR10/QCR9, UQCR11/QCR10 and a cleavage product of UQCRFS1). This cytochrome bc1 complex then forms a dimer. Heme b is required as a cofactor.

It localises to the mitochondrion inner membrane. Functionally, component of the ubiquinol-cytochrome c reductase complex (complex III or cytochrome b-c1 complex) that is part of the mitochondrial respiratory chain. The b-c1 complex mediates electron transfer from ubiquinol to cytochrome c. Contributes to the generation of a proton gradient across the mitochondrial membrane that is then used for ATP synthesis. The protein is Cytochrome b (MT-CYB) of Lepilemur aeeclis (Sportive lemur).